The following is a 435-amino-acid chain: Xylose isomerase (435 aa).

Residues His100 and Asp103 contribute to the active site. 7 residues coordinate Mg(2+): Glu231, Glu267, His270, Asp295, Asp306, Asp308, and Asp338.

It belongs to the xylose isomerase family. In terms of assembly, homotetramer. The cofactor is Mg(2+).

It is found in the cytoplasm. The enzyme catalyses alpha-D-xylose = alpha-D-xylulofuranose. This is Xylose isomerase from Brucella anthropi (strain ATCC 49188 / DSM 6882 / CCUG 24695 / JCM 21032 / LMG 3331 / NBRC 15819 / NCTC 12168 / Alc 37) (Ochrobactrum anthropi).